The chain runs to 708 residues: Radial spoke head protein 6 homolog A (708 aa).

Disordered regions lie at residues 1–94 (MGEP…GYTP), 376–407 (ETHG…IIPK), 495–514 (EEEG…FEEN), and 663–708 (GPEI…DLED). Positions 10–32 (PSQTRRASQGSERARSQEYSQPL) are enriched in polar residues. Positions 47 to 56 (RGSRSSQGSQ) are enriched in low complexity. Over residues 495–504 (EEEGDEEEEG) the composition is skewed to acidic residues. Low complexity predominate over residues 680–690 (LKAAQEQALAA). The span at 691-708 (AEEEEEDEEEEEDEDLED) shows a compositional bias: acidic residues.

The protein belongs to the flagellar radial spoke RSP4/6 family. In terms of assembly, component of the axonemal radial spoke 1 (RS1) and 2 (RS2) complexes, at least composed of spoke head proteins RSPH1, RSPH3, RSPH9 and the cilia-specific component RSPH4A or sperm-specific component RSPH6A, spoke stalk proteins RSPH14, DNAJB13, DYDC1, ROPN1L and NME5, and the RS1 complex-specific anchor protein IQUB. Interacts with RSPH1. Interacts with RSPH3B. Interacts with RSPH4A. Interacts with RSPH9. Interacts with RSPH10B. Post-translationally, phosphorylated by PKA. Phosphorylation increases in capacitated sperm. In terms of tissue distribution, expressed in sperm and testis (at protein level).

Its subcellular location is the cytoplasm. The protein localises to the cytoskeleton. It is found in the flagellum axoneme. Functions as part of radial spoke complexes in the axoneme of sperm flagella that play an important part in motility. The triple radial spokes (RS1, RS2 and RS3) are required to modulate beating of the sperm flagellum. In Mus musculus (Mouse), this protein is Radial spoke head protein 6 homolog A.